The sequence spans 302 residues: ATP synthase subunit b 1 (302 aa).

Residues 5 to 22 (WFTVIAQGINFLLLLWLL) form a helical membrane-spanning segment. A disordered region spans residues 278–302 (GLPENEGTDNPEANPPHAEAKIPHA).

Belongs to the ATPase B chain family. As to quaternary structure, F-type ATPases have 2 components, F(1) - the catalytic core - and F(0) - the membrane proton channel. F(1) has five subunits: alpha(3), beta(3), gamma(1), delta(1), epsilon(1). F(0) has three main subunits: a(1), b(2) and c(10-14). The alpha and beta chains form an alternating ring which encloses part of the gamma chain. F(1) is attached to F(0) by a central stalk formed by the gamma and epsilon chains, while a peripheral stalk is formed by the delta and b chains.

It localises to the cell inner membrane. Functionally, f(1)F(0) ATP synthase produces ATP from ADP in the presence of a proton or sodium gradient. F-type ATPases consist of two structural domains, F(1) containing the extramembraneous catalytic core and F(0) containing the membrane proton channel, linked together by a central stalk and a peripheral stalk. During catalysis, ATP synthesis in the catalytic domain of F(1) is coupled via a rotary mechanism of the central stalk subunits to proton translocation. Component of the F(0) channel, it forms part of the peripheral stalk, linking F(1) to F(0). The sequence is that of ATP synthase subunit b 1 from Pseudoalteromonas atlantica (strain T6c / ATCC BAA-1087).